Here is a 288-residue protein sequence, read N- to C-terminus: UDP-3-O-acyl-N-acetylglucosamine deacetylase (288 aa).

The Zn(2+) site is built by His-79, His-236, and Asp-240. Catalysis depends on His-263, which acts as the Proton donor.

Belongs to the LpxC family. It depends on Zn(2+) as a cofactor.

The enzyme catalyses a UDP-3-O-[(3R)-3-hydroxyacyl]-N-acetyl-alpha-D-glucosamine + H2O = a UDP-3-O-[(3R)-3-hydroxyacyl]-alpha-D-glucosamine + acetate. Its pathway is glycolipid biosynthesis; lipid IV(A) biosynthesis; lipid IV(A) from (3R)-3-hydroxytetradecanoyl-[acyl-carrier-protein] and UDP-N-acetyl-alpha-D-glucosamine: step 2/6. Its function is as follows. Catalyzes the hydrolysis of UDP-3-O-myristoyl-N-acetylglucosamine to form UDP-3-O-myristoylglucosamine and acetate, the committed step in lipid A biosynthesis. The chain is UDP-3-O-acyl-N-acetylglucosamine deacetylase from Rickettsia africae (strain ESF-5).